A 375-amino-acid polypeptide reads, in one-letter code: Elongation factor Tu (375 aa).

The tr-type G domain maps to 10–205 (KPHINVGAIG…TMDKYFVIPE (196 aa)). The interval 19–26 (GHVDHGKT) is G1. 19–26 (GHVDHGKT) is a binding site for GTP. T26 contributes to the Mg(2+) binding site. The interval 60–64 (GITIN) is G2. The segment at 81 to 84 (DCPG) is G3. Residues 81–85 (DCPGH) and 136–139 (NKMD) each bind GTP. Residues 136–139 (NKMD) form a G4 region. The interval 173–175 (SAF) is G5.

This sequence belongs to the TRAFAC class translation factor GTPase superfamily. Classic translation factor GTPase family. EF-Tu/EF-1A subfamily. In terms of assembly, monomer.

It is found in the cytoplasm. The enzyme catalyses GTP + H2O = GDP + phosphate + H(+). GTP hydrolase that promotes the GTP-dependent binding of aminoacyl-tRNA to the A-site of ribosomes during protein biosynthesis. This chain is Elongation factor Tu (tuf), found in Spirochaeta aurantia.